The chain runs to 216 residues: Orotate phosphoribosyltransferase (216 aa).

Residues arginine 100, lysine 104, histidine 106, and 126-134 (EDLISTGGS) each bind 5-phospho-alpha-D-ribose 1-diphosphate. Residue serine 130 participates in orotate binding.

The protein belongs to the purine/pyrimidine phosphoribosyltransferase family. PyrE subfamily. As to quaternary structure, homodimer. Interacts with BrxC. It depends on Mg(2+) as a cofactor.

It catalyses the reaction orotidine 5'-phosphate + diphosphate = orotate + 5-phospho-alpha-D-ribose 1-diphosphate. It participates in pyrimidine metabolism; UMP biosynthesis via de novo pathway; UMP from orotate: step 1/2. In terms of biological role, catalyzes the transfer of a ribosyl phosphate group from 5-phosphoribose 1-diphosphate to orotate, leading to the formation of orotidine monophosphate (OMP). The polypeptide is Orotate phosphoribosyltransferase (Bacillus subtilis (strain 168)).